Consider the following 338-residue polypeptide: Glycerol-3-phosphate dehydrogenase [NAD(P)+] (338 aa).

NADPH contacts are provided by Ser-14, Tyr-15, His-35, and Lys-109. The sn-glycerol 3-phosphate site is built by Lys-109, Gly-138, and Thr-140. Ala-142 serves as a coordination point for NADPH. Sn-glycerol 3-phosphate is bound by residues Lys-194, Asp-247, Ser-257, Arg-258, and Asn-259. Lys-194 (proton acceptor) is an active-site residue. Arg-258 contributes to the NADPH binding site. 2 residues coordinate NADPH: Val-282 and Glu-284.

Belongs to the NAD-dependent glycerol-3-phosphate dehydrogenase family.

The protein resides in the cytoplasm. The enzyme catalyses sn-glycerol 3-phosphate + NAD(+) = dihydroxyacetone phosphate + NADH + H(+). It catalyses the reaction sn-glycerol 3-phosphate + NADP(+) = dihydroxyacetone phosphate + NADPH + H(+). The protein operates within membrane lipid metabolism; glycerophospholipid metabolism. Functionally, catalyzes the reduction of the glycolytic intermediate dihydroxyacetone phosphate (DHAP) to sn-glycerol 3-phosphate (G3P), the key precursor for phospholipid synthesis. This is Glycerol-3-phosphate dehydrogenase [NAD(P)+] from Shewanella baltica (strain OS155 / ATCC BAA-1091).